The sequence spans 780 residues: Translation initiation factor IF-2 (780 aa).

The disordered stretch occupies residues 44–194; sequence RQLDNAVDGT…TPPKPKELPE (151 aa). Basic and acidic residues predominate over residues 53 to 65; sequence TNKKAEAPKKETT. A compositionally biased stretch (polar residues) spans 66-81; the sequence is SNENGNSKGPNKPNMT. 2 stretches are compositionally biased toward low complexity: residues 82–93 and 117–168; these read NSNEKSNKPNKP and ANTS…NNKG. The tr-type G domain maps to 281-450; that stretch reads ERPPVVTIMG…LLVSEVEELK (170 aa). Positions 290–297 are G1; the sequence is GHVDHGKT. GTP is bound at residue 290–297; sequence GHVDHGKT. The segment at 315-319 is G2; sequence GITQH. Residues 336 to 339 form a G3 region; it reads DTPG. GTP-binding positions include 336–340 and 390–393; these read DTPGH and NKID. The interval 390 to 393 is G4; that stretch reads NKID. Positions 426 to 428 are G5; it reads SAK.

It belongs to the TRAFAC class translation factor GTPase superfamily. Classic translation factor GTPase family. IF-2 subfamily.

It is found in the cytoplasm. One of the essential components for the initiation of protein synthesis. Protects formylmethionyl-tRNA from spontaneous hydrolysis and promotes its binding to the 30S ribosomal subunits. Also involved in the hydrolysis of GTP during the formation of the 70S ribosomal complex. The sequence is that of Translation initiation factor IF-2 from Listeria welshimeri serovar 6b (strain ATCC 35897 / DSM 20650 / CCUG 15529 / CIP 8149 / NCTC 11857 / SLCC 5334 / V8).